Reading from the N-terminus, the 290-residue chain is Cytochrome bo(3) ubiquinol oxidase subunit 2 (290 aa).

The signal sequence occupies residues Met1–Gly24. Cys25 is lipidated: N-palmitoyl cysteine. The S-diacylglycerol cysteine moiety is linked to residue Cys25. At Cys25–Ser42 the chain is on the extracellular side. Residues Ile43 to Ile63 form a helical membrane-spanning segment. The Cytoplasmic portion of the chain corresponds to Tyr64–Lys87. Residues Ile88 to Trp108 traverse the membrane as a helical segment. Residues Asn109–His290 are Extracellular-facing.

This sequence belongs to the cytochrome c oxidase subunit 2 family. As to quaternary structure, heterooctamer of two A chains, two B chains, two C chains and two D chains.

The protein localises to the cell membrane. Cytochrome bo(3) ubiquinol terminal oxidase is the component of the aerobic respiratory chain of E.coli that predominates when cells are grown at high aeration. Has proton pump activity across the membrane in addition to electron transfer, pumping 2 protons/electron. This Buchnera aphidicola subsp. Schizaphis graminum (strain Sg) protein is Cytochrome bo(3) ubiquinol oxidase subunit 2 (cyoA).